The primary structure comprises 845 residues: Cadherin-related family member 5 (845 aa).

The first 25 residues, Met-1–Ala-25, serve as a signal peptide directing secretion. Over Gln-26–Ala-669 the chain is Extracellular. N-linked (GlcNAc...) asparagine glycosylation is found at Asn-44, Asn-81, Asn-140, Asn-198, Asn-297, Asn-308, and Asn-405. 4 Cadherin domains span residues Phe-71 to Phe-124, Pro-125 to Phe-237, Ile-249 to Phe-354, and Pro-355 to Thr-459. The tract at residues Ser-452 to Lys-661 is disordered. Low complexity predominate over residues Ser-506–Pro-518. Residue Asn-526 is glycosylated (N-linked (GlcNAc...) asparagine). Composition is skewed to polar residues over residues Thr-539 to Gln-549, Gly-556 to Pro-594, and Ala-602 to Gln-611. Tandem repeats lie at residues Ala-540 to Thr-570, Ala-571 to Thr-601, and Ala-602 to Gly-631. The interval Ala-540–Pro-645 is 4 X 31 AA approximate tandem repeats. A 4; truncated repeat occupies Thr-632–Pro-645. The segment covering Ala-633–Ser-652 has biased composition (low complexity). A helical membrane pass occupies residues Ala-670–Val-690. Residues His-691 to Ile-845 are Cytoplasmic-facing. The mediates interaction with USH1C and MYO7B and is required for proper localization to microvilli tips and function in microvilli organization stretch occupies residues His-691–Ile-845. The tract at residues Ala-724–Lys-789 is disordered. Pro residues predominate over residues Val-729 to Pro-762. Phosphoserine is present on Ser-770. Thr-810 is modified (phosphothreonine). Residues Leu-811–Ile-845 form a disordered region. Residues Ser-817, Ser-819, and Ser-821 each carry the phosphoserine modification. The segment covering Tyr-835–Ile-845 has biased composition (low complexity).

In terms of assembly, part of the IMAC/intermicrovillar adhesion complex/intermicrovillar tip-link complex composed of ANKS4B, MYO7B, USH1C, CDHR2 and CDHR5. Interacts (via cytoplasmic domain) with USH1C and MYO7B; required for proper localization of CDHR5 to microvilli tips and its function in brush border differentiation. In terms of processing, N- and O-glycosylated. Highest expression in kidney, liver, colon and small intestine. In kidney, expressed apically along brush border of proximal convoluted tubule but not in cortical collecting ducts. Isoform 1 is expressed primarily in adult small intestine and colon. Isoform 2 is highly expressed in fetal liver. Expressed in duodenum with higher expression in enterocytes along the villus axis and lower expression in crypts (at protein level).

It is found in the apical cell membrane. Its subcellular location is the cell projection. It localises to the microvillus membrane. In terms of biological role, intermicrovillar adhesion molecule that forms, via its extracellular domain, calcium-dependent heterophilic complexes with CDHR2 on adjacent microvilli. Thereby, controls the packing of microvilli at the apical membrane of epithelial cells. Through its cytoplasmic domain, interacts with microvillus cytoplasmic proteins to form the intermicrovillar adhesion complex/IMAC. This complex plays a central role in microvilli and epithelial brush border differentiation. This is Cadherin-related family member 5 from Homo sapiens (Human).